Reading from the N-terminus, the 541-residue chain is RING finger protein 37 (541 aa).

Positions 258–338 (DVPEEFLDPI…DHFLLQHSIP (81 aa)) constitute a U-box domain. R451 bears the Asymmetric dimethylarginine mark. Residues 483–528 (CASCKRVFSPYFKKEPVYQLPCGHLLCRPCLGEKQRSLPMTCTACQ) form an RING-type zinc finger.

As to quaternary structure, interacts with UBE2L3. Interacts with VCP. As to expression, expressed in liver, heart, brain, kidney and testis.

The protein resides in the nucleus. It carries out the reaction S-ubiquitinyl-[E2 ubiquitin-conjugating enzyme]-L-cysteine + [acceptor protein]-L-lysine = [E2 ubiquitin-conjugating enzyme]-L-cysteine + N(6)-ubiquitinyl-[acceptor protein]-L-lysine.. The protein operates within protein modification; protein ubiquitination. May have a ubiquitin-protein ligase activity acting as an E3 ubiquitin-protein ligase or as a ubiquitin-ubiquitin ligase promoting elongation of ubiquitin chains on substrates. The polypeptide is RING finger protein 37 (Homo sapiens (Human)).